A 286-amino-acid polypeptide reads, in one-letter code: uncharacterized protein (286 aa).

A run of 7 helical transmembrane segments spans residues 30–50 (LTFM…LTVQ), 68–88 (LSTI…VTAF), 99–119 (WFWA…GILL), 136–156 (IVYA…LSAL), 169–189 (LFHI…LSFI), 205–225 (IIPG…VYFV), and 254–274 (SALF…YFIL).

It localises to the cell membrane. This is an uncharacterized protein from Mycoplasma genitalium (strain ATCC 33530 / DSM 19775 / NCTC 10195 / G37) (Mycoplasmoides genitalium).